Consider the following 151-residue polypeptide: uncharacterized protein (151 aa).

The disordered stretch occupies residues 1 to 77 (MSLLGGMWKS…LGSNPISSSR (77 aa)). 2 stretches are compositionally biased toward low complexity: residues 19–54 (PKPS…RSSN) and 63–76 (SISG…ISSS).

This is an uncharacterized protein from Methanothermobacter marburgensis (strain ATCC BAA-927 / DSM 2133 / JCM 14651 / NBRC 100331 / OCM 82 / Marburg) (Methanobacterium thermoautotrophicum).